The sequence spans 102 residues: Spexin prohormone 1 (102 aa).

The first 26 residues, 1–26, serve as a signal peptide directing secretion; it reads MKDLRTLAAYALALLLLATFVSYSRS. Residues 27–35 constitute a propeptide that is removed on maturation; sequence APMGSFQRR. Gln49 carries the post-translational modification Glutamine amide. A propeptide spanning residues 50 to 102 is cleaved from the precursor; sequence GRRFVSEDRNEGDLYDTIRLESQSQNTENLSISKAAAFLLNVLQQARDEGEPY.

This sequence belongs to the spexin family. Expressed in the anterior hypothalamus, ventromedial thalamic nucleus and medial longitudinal fasciculus of the brain (at protein level). Widely expressed. Expressed predominantly in the spleen, kidney, liver and testis. Expressed in olfactory bulb, pituitary, telencephalon, diencephalons, spinal cord, optic tectum, cerebellum and hypothalamus of the brain.

It is found in the secreted. Its subcellular location is the extracellular space. The protein resides in the cytoplasmic vesicle. It localises to the secretory vesicle. Functionally, plays a role in the regulation of food intake and body weight and in reproduction. May also play a role as a central modulator of cardiovascular and renal function and nociception. Brain administration of the peptide inhibits food consumption. May function as a satiety factor for feeding control. Involved in the negative regulation of the reproductive axis by inhibiting luteinizing hormone secretion from pituitary cells. The polypeptide is Spexin prohormone 1 (spx) (Carassius auratus (Goldfish)).